The chain runs to 40 residues: Photosystem II reaction center protein Y (40 aa).

A helical transmembrane segment spans residues 4-22 (LLVITLPILAAIGWVTLNI).

It belongs to the PsbY family. In terms of assembly, PSII is composed of 1 copy each of membrane proteins PsbA, PsbB, PsbC, PsbD, PsbE, PsbF, PsbH, PsbI, PsbJ, PsbK, PsbL, PsbM, PsbT, PsbX, PsbY, Psb30/Ycf12, peripheral proteins PsbO, CyanoQ (PsbQ), PsbU, PsbV and a large number of cofactors. It forms dimeric complexes.

It localises to the cellular thylakoid membrane. Functionally, loosely associated component of the core of photosystem II (PSII), it is not always seen in crystals. PSII is a light-driven water plastoquinone oxidoreductase, using light energy to abstract electrons from H(2)O, generating a proton gradient subsequently used for ATP formation. The protein is Photosystem II reaction center protein Y of Prochlorococcus marinus (strain SARG / CCMP1375 / SS120).